The sequence spans 200 residues: MSEALKVLGEHIANAQDAAVTGWSIANGELTVEIHRDRIETVLTWLRDDPACRFTTLIDICGVDYPQRAERFEVVYHLLSMHQNHRIRVKLSTDEEAPVPTVIPVYPVADWFEREAFDMYGIVFADHPDLRRLLTDYGFEGYPLRKDFPLTGYVEVRWDEEEKRVVYEPVELVQEYRDFDFMSPWEGAKYILPGDEKAEG.

It belongs to the complex I 30 kDa subunit family. In terms of assembly, NDH-1 is composed of 14 different subunits. Subunits NuoB, C, D, E, F, and G constitute the peripheral sector of the complex.

Its subcellular location is the cell inner membrane. It carries out the reaction a quinone + NADH + 5 H(+)(in) = a quinol + NAD(+) + 4 H(+)(out). Functionally, NDH-1 shuttles electrons from NADH, via FMN and iron-sulfur (Fe-S) centers, to quinones in the respiratory chain. The immediate electron acceptor for the enzyme in this species is believed to be ubiquinone. Couples the redox reaction to proton translocation (for every two electrons transferred, four hydrogen ions are translocated across the cytoplasmic membrane), and thus conserves the redox energy in a proton gradient. This is NADH-quinone oxidoreductase subunit C from Maricaulis maris (strain MCS10) (Caulobacter maris).